Consider the following 449-residue polypeptide: Phosphoglucosamine mutase (449 aa).

The active-site Phosphoserine intermediate is the Ser102. 4 residues coordinate Mg(2+): Ser102, Asp241, Asp243, and Asp245. Ser102 is modified (phosphoserine).

The protein belongs to the phosphohexose mutase family. Requires Mg(2+) as cofactor. Post-translationally, activated by phosphorylation.

It carries out the reaction alpha-D-glucosamine 1-phosphate = D-glucosamine 6-phosphate. Catalyzes the conversion of glucosamine-6-phosphate to glucosamine-1-phosphate. The protein is Phosphoglucosamine mutase of Pseudoalteromonas translucida (strain TAC 125).